Reading from the N-terminus, the 557-residue chain is Formate--tetrahydrofolate ligase (557 aa).

65 to 72 (TPAGEGKT) contacts ATP.

It belongs to the formate--tetrahydrofolate ligase family.

It carries out the reaction (6S)-5,6,7,8-tetrahydrofolate + formate + ATP = (6R)-10-formyltetrahydrofolate + ADP + phosphate. The protein operates within one-carbon metabolism; tetrahydrofolate interconversion. This is Formate--tetrahydrofolate ligase from Methylorubrum extorquens (strain CM4 / NCIMB 13688) (Methylobacterium extorquens).